The following is a 261-amino-acid chain: MAVGKNKRISKGKKGGKKKAADPFSKKDWYDIKAPSVFQVKNVGKTLVSRTQGTKIASEGLKHRVFEISLADLQGDEDNAFRKIRLRAEDVQGKNVLTNFYGMDFTTDKLRSLVRKWQTLIEAHVDVKTTDNYTLRMFCIGFTKRRSNQVKRTCYAQSSQIRQIRRKMREIMVNQATSCDLKELVRKFIPEMIGKEIEKATSSIYPLQNVFIRKVKILKSPKFDLGKLMEVHGDYSEDVGTKVESPADETVVEGTPEIVGA.

Positions 1–18 (MAVGKNKRISKGKKGGKK) are enriched in basic residues. Residues 1 to 22 (MAVGKNKRISKGKKGGKKKAAD) form a disordered region.

This sequence belongs to the eukaryotic ribosomal protein eS1 family. Component of the small ribosomal subunit. Mature ribosomes consist of a small (40S) and a large (60S) subunit. The 40S subunit contains about 33 different proteins and 1 molecule of RNA (18S). The 60S subunit contains about 49 different proteins and 3 molecules of RNA (25S, 5.8S and 5S).

The protein localises to the cytoplasm. This is Small ribosomal subunit protein eS1 from Cicer arietinum (Chickpea).